Here is a 185-residue protein sequence, read N- to C-terminus: Ribosome maturation factor RimM (185 aa).

Residues 105 to 184 (KDEYYWKDII…IVVVDWEIYK (80 aa)) enclose the PRC barrel domain.

This sequence belongs to the RimM family. As to quaternary structure, binds ribosomal protein uS19.

It localises to the cytoplasm. Its function is as follows. An accessory protein needed during the final step in the assembly of 30S ribosomal subunit, possibly for assembly of the head region. Essential for efficient processing of 16S rRNA. May be needed both before and after RbfA during the maturation of 16S rRNA. It has affinity for free ribosomal 30S subunits but not for 70S ribosomes. This chain is Ribosome maturation factor RimM, found in Blochmanniella floridana.